Reading from the N-terminus, the 307-residue chain is Reaction center protein M chain (307 aa).

Ala-2 is modified (blocked amino end (Ala)). Transmembrane regions (helical) follow at residues 45–69 (FWNA…FAQV), 103–123 (GWWL…YMHI), and 133–153 (KPYL…IYII). Position 192 (His-192) interacts with (7R,8Z)-bacteriochlorophyll b. Residues 196 to 216 (IFFLLGSTLLLAMHAGTIWAL) traverse the membrane as a helical segment. His-209, Glu-236, and His-256 together coordinate Fe cation. Residues 257–277 (LWAFWFAWLCGITGALGVFFS) form a helical membrane-spanning segment.

Belongs to the reaction center PufL/M/PsbA/D family. In terms of assembly, reaction center is composed of four bacteriochlorophylls, two bacteriopheophytins, two ubiquinones, one iron, and two highly hydrophobic polypeptide chains (designated L and M).

The protein localises to the cell membrane. The reaction center is a membrane-bound complex that mediates the initial photochemical event in the electron transfer process of photosynthesis. The polypeptide is Reaction center protein M chain (pufM) (Chloroflexus aurantiacus (strain ATCC 29366 / DSM 635 / J-10-fl)).